We begin with the raw amino-acid sequence, 329 residues long: Malate dehydrogenase (329 aa).

12 to 18 is an NAD(+) binding site; sequence GAAGQIG. Residues Arg93 and Arg99 each coordinate substrate. Residues Asn106, Gln113, and 130-132 each bind NAD(+); that span reads TGN. Substrate contacts are provided by Asn132 and Arg163. The active-site Proton acceptor is His188.

This sequence belongs to the LDH/MDH superfamily. MDH type 2 family.

It carries out the reaction (S)-malate + NAD(+) = oxaloacetate + NADH + H(+). Its function is as follows. Catalyzes the reversible oxidation of malate to oxaloacetate. The polypeptide is Malate dehydrogenase (Mycolicibacterium paratuberculosis (strain ATCC BAA-968 / K-10) (Mycobacterium paratuberculosis)).